We begin with the raw amino-acid sequence, 103 residues long: MYAVIKHGGKQYKVSVGDVLELDRIEGAEPKSSIELNEVLLVKGDDTKIGAPTVEGAKVVAEVINNARGKKVIIFKKRRRKDSRKKRGFRRDFTRVVIKEIVA.

This sequence belongs to the bacterial ribosomal protein bL21 family. As to quaternary structure, part of the 50S ribosomal subunit. Contacts protein L20.

Functionally, this protein binds to 23S rRNA in the presence of protein L20. The sequence is that of Large ribosomal subunit protein bL21 from Nautilia profundicola (strain ATCC BAA-1463 / DSM 18972 / AmH).